The chain runs to 118 residues: UPF0102 protein Csac_2148 (118 aa).

This sequence belongs to the UPF0102 family.

The polypeptide is UPF0102 protein Csac_2148 (Caldicellulosiruptor saccharolyticus (strain ATCC 43494 / DSM 8903 / Tp8T 6331)).